The following is a 1284-amino-acid chain: 1,6-alpha-glucosyltransferase (1284 aa).

Residues 1–35 (MRPPNKEIPRILAFFTAFTLFGSTLALLPAPPAHA) form the signal peptide. Asp-433 functions as the Nucleophile in the catalytic mechanism. Asp-436 is a catalytic residue. The active-site Proton donor is Asp-495. 2 consecutive CBM6 domains span residues 856-988 (SQYE…ITVP) and 994-1120 (GKYE…LLLS).

It belongs to the glycosyl hydrolase 31 family.

It localises to the secreted. The catalysed reaction is 2 D-maltotetraose = alpha-isomaltosyl-(1-&gt;4)-D-maltotriose + D-maltotriose. It carries out the reaction Transfers an alpha-D-glucosyl residue in a (1-&gt;4)-alpha-D-glucan to the primary hydroxy group of glucose, free or combined in a (1-&gt;4)-alpha-D-glucan.. Strongly activated and stabilized by various divalent cations. Strongly inhibited by Cu(2+), Hg(2+) and EDTA, and moderately inhibited by Tris. Functionally, glycosyltransferase involved, together with CtsY, in the conversion of alpha-1,4-glucan into a cyclic tetrasaccharide (CTS) constructed from four alpha-glucopyranosyl residues. Catalyzes an intermolecular transglucosylation in which a glucose residue at the non-reducing end of maltotetraose is transferred to the 6-OH of an other non-reducing glucose, leading to the formation of alpha-isomaltosyl-(1-&gt;4)-D-maltotriose. Has a wide substrate specificity, and acts on oligosaccharides with alpha-1,4-glucosidic linkages at the non-reducing end, except for maltose. In contrast, has little activity toward oligosaccharides with alpha-1,6-glucosidic linkages at the non-reducing end. In Sporosarcina globispora (Bacillus globisporus), this protein is 1,6-alpha-glucosyltransferase.